Here is a 25-residue protein sequence, read N- to C-terminus: Hypotensin-2 (25 aa).

Residues 1 to 25 are disordered; sequence AEIDFSGIPEDIIKEIKETNAKPPA. At S6 the chain carries Phosphoserine. The segment covering 11–25 has biased composition (basic and acidic residues); the sequence is DIIKEIKETNAKPPA.

This sequence belongs to the non-disulfide-bridged peptide (NDBP) superfamily. Expressed by the venom gland.

The protein resides in the secreted. Agonist of the B2 bradykinin receptor (BDKRB2). Potentiates the hypotensive effect of bradykinin (BK) and induces a direct vasorelaxing effect, independently of BK, by endothelium- and nitric oxide (NO)-dependent mechanisms in rat aortic ring preparations. Does not inhibit the angiotensin-converting enzyme (ACE). Also exerts proangiogenic, antiinflammatory, and antifibrogenic activities. Does not inhibit the angiotensin-converting enzyme (ACE) but weakly increases its activity, and weakly inhibits neprilysin (NEP) in a non-competitive manner. Exerts intermediate cytotoxicity and pro-inflammatory effects on mouse macrophages, and increases the phagocytic activity of these murine cells. In terms of biological role, presents weak hemolytic activity at physiological concentrations (micromolar range), and weak lactate dehydrogenase (LDH) release from mast cells. Does not induce mast cell degranulation, and antimicrobial effects. In vivo, causes intense pain (but no edema formation), when injected in mice hind paws. Also induces discomfort and anxiety in mice, as it moderately diminishes locomotion and moderately increases rearing behavior. The chain is Hypotensin-2 from Tityus serrulatus (Brazilian scorpion).